A 76-amino-acid polypeptide reads, in one-letter code: Alpha-amylase inhibitor Z-2685 (76 aa).

2 disulfide bridges follow: Cys-9-Cys-25 and Cys-43-Cys-70.

Functionally, inhibits mammalian alpha-amylases specifically but has no action on plant and microbial alpha-amylases. The polypeptide is Alpha-amylase inhibitor Z-2685 (Streptomyces rochei (Streptomyces parvullus)).